We begin with the raw amino-acid sequence, 269 residues long: tRNA pseudouridine synthase A (269 aa).

Aspartate 55 functions as the Nucleophile in the catalytic mechanism. Tyrosine 111 serves as a coordination point for substrate.

The protein belongs to the tRNA pseudouridine synthase TruA family.

It carries out the reaction uridine(38/39/40) in tRNA = pseudouridine(38/39/40) in tRNA. In terms of biological role, formation of pseudouridine at positions 38, 39 and 40 in the anticodon stem and loop of transfer RNAs. The polypeptide is tRNA pseudouridine synthase A (Methanosarcina barkeri (strain Fusaro / DSM 804)).